The chain runs to 369 residues: Chanoclavine-I aldehyde reductase fgaOx3 (369 aa).

Residues Pro23 to Thr25, Ala58, Gln100, and His169 each bind FMN. The substrate site is built by His169 and Asn172. Tyr174 functions as the Proton donor in the catalytic mechanism. Residues Gly292, Gly316–Arg317, and Arg317 contribute to the FMN site. Tyr344 contacts substrate.

This sequence belongs to the NADH:flavin oxidoreductase/NADH oxidase family. Monomer. It depends on FMN as a cofactor.

It catalyses the reaction dihydrochanoclavine-I aldehyde + NADP(+) = chanoclavine-I aldehyde + NADPH + H(+). It participates in alkaloid biosynthesis; ergot alkaloid biosynthesis. Its function is as follows. Chanoclavine-I aldehyde reductase; part of the gene cluster that mediates the biosynthesis of isofumigaclavines, fungal ergot alkaloids. The tryptophan dimethylallyltransferase ifgA catalyzes the first step of ergot alkaloid biosynthesis by condensing dimethylallyl diphosphate (DMAP) and tryptophan to form 4-dimethylallyl-L-tryptophan. The second step is catalyzed by the methyltransferase ifgB that methylates 4-dimethylallyl-L-tryptophan in the presence of S-adenosyl-L-methionine, resulting in the formation of N-methyl-dimethylallyl-L-tryptophan. The catalase ifgD and the FAD-dependent oxidoreductase ifgC then transform N-methyl-dimethylallyl-L-tryptophan to chanoclavine-I which is further oxidized by ifgE in the presence of NAD(+), resulting in the formation of chanoclavine-I aldehyde. The chanoclavine-I aldehyde reductases ifgG and/or fgaOx3 reduce chanoclavine-I aldehyde to dihydrochanoclavine-I aldehyde that spontaneously dehydrates to form 6,8-dimethyl-6,7-didehydroergoline. The festuclavine dehydrogenases ifgF1 and/or ifgF2 then catalyze the reduction of 6,8-dimethyl-6,7-didehydroergoline to form festuclavine. Hydrolysis of festuclavine by a yet undetermined cytochrome P450 monooxygenase (called ifgH) then leads to the formation of isofumigaclavine B which is in turn acetylated by ifgI to isofumigaclavine A. Penicillium roqueforti has interestingly at least two sets of genes for the consumption of chanoclavine-I aldehyde on three different loci, the OYEs ifgG/fgaOx3 and the festuclavine synthase homologs ifgF1/ifgF2. The reason for the duplication of these genes is unclear, probably to ensure the conversion of chanoclavine-I aldehyde by differential gene expression under various environmental conditions. In Penicillium roqueforti (strain FM164), this protein is Chanoclavine-I aldehyde reductase fgaOx3.